A 540-amino-acid chain; its full sequence is CTP synthase (540 aa).

An amidoligase domain region spans residues 1 to 267 (MKIMKFIFIT…GKLVTKKLNL (267 aa)). Residue Ser-15 coordinates CTP. Residue Ser-15 participates in UTP binding. 16 to 21 (SLGKGI) contributes to the ATP binding site. Position 56 (Tyr-56) interacts with L-glutamine. Asp-73 serves as a coordination point for ATP. 2 residues coordinate Mg(2+): Asp-73 and Glu-141. CTP-binding positions include 148 to 150 (DIE), 188 to 193 (KTKPTQ), and Lys-224. Residues 188–193 (KTKPTQ) and Lys-224 each bind UTP. 240–242 (RDA) is an ATP binding site. The 249-residue stretch at 292–540 (TIGIVGKYVE…VRASLGEKIK (249 aa)) folds into the Glutamine amidotransferase type-1 domain. Gly-360 is a binding site for L-glutamine. The active-site Nucleophile; for glutamine hydrolysis is Cys-387. L-glutamine contacts are provided by residues 388-391 (MGMQ), Glu-411, and Arg-468. Catalysis depends on residues His-513 and Glu-515.

Belongs to the CTP synthase family. As to quaternary structure, homotetramer.

The catalysed reaction is UTP + L-glutamine + ATP + H2O = CTP + L-glutamate + ADP + phosphate + 2 H(+). It catalyses the reaction L-glutamine + H2O = L-glutamate + NH4(+). The enzyme catalyses UTP + NH4(+) + ATP = CTP + ADP + phosphate + 2 H(+). It participates in pyrimidine metabolism; CTP biosynthesis via de novo pathway; CTP from UDP: step 2/2. With respect to regulation, allosterically activated by GTP, when glutamine is the substrate; GTP has no effect on the reaction when ammonia is the substrate. The allosteric effector GTP functions by stabilizing the protein conformation that binds the tetrahedral intermediate(s) formed during glutamine hydrolysis. Inhibited by the product CTP, via allosteric rather than competitive inhibition. Catalyzes the ATP-dependent amination of UTP to CTP with either L-glutamine or ammonia as the source of nitrogen. Regulates intracellular CTP levels through interactions with the four ribonucleotide triphosphates. The protein is CTP synthase of Methanocaldococcus jannaschii (strain ATCC 43067 / DSM 2661 / JAL-1 / JCM 10045 / NBRC 100440) (Methanococcus jannaschii).